The sequence spans 85 residues: Large ribosomal subunit protein bL27 (85 aa).

The interval 1 to 22 (MAHKKAGGSSRNGRDSHSKRLG) is disordered.

The protein belongs to the bacterial ribosomal protein bL27 family.

This Nitrosomonas europaea (strain ATCC 19718 / CIP 103999 / KCTC 2705 / NBRC 14298) protein is Large ribosomal subunit protein bL27.